A 276-amino-acid polypeptide reads, in one-letter code: Large ribosomal subunit protein uL2 (276 aa).

The interval 221 to 276 (RGSAMNPNDHPHGGGEGRAPIGRKSPMTPWGKKARGVKTRDRKKASNALIIRRRKK) is disordered. The segment covering 252-276 (KKARGVKTRDRKKASNALIIRRRKK) has biased composition (basic residues).

It belongs to the universal ribosomal protein uL2 family. As to quaternary structure, part of the 50S ribosomal subunit. Forms a bridge to the 30S subunit in the 70S ribosome.

Its function is as follows. One of the primary rRNA binding proteins. Required for association of the 30S and 50S subunits to form the 70S ribosome, for tRNA binding and peptide bond formation. It has been suggested to have peptidyltransferase activity; this is somewhat controversial. Makes several contacts with the 16S rRNA in the 70S ribosome. In Aster yellows witches'-broom phytoplasma (strain AYWB), this protein is Large ribosomal subunit protein uL2.